A 219-amino-acid polypeptide reads, in one-letter code: Orotate phosphoribosyltransferase (219 aa).

A 5-phospho-alpha-D-ribose 1-diphosphate-binding site is contributed by Lys26. 34–35 (FF) contacts orotate. 5-phospho-alpha-D-ribose 1-diphosphate-binding positions include 72–73 (YK), Arg98, Lys99, Lys102, His104, and 124–132 (DDVITAGTA). Positions 128 and 156 each coordinate orotate.

The protein belongs to the purine/pyrimidine phosphoribosyltransferase family. PyrE subfamily. Homodimer. Mg(2+) is required as a cofactor.

It carries out the reaction orotidine 5'-phosphate + diphosphate = orotate + 5-phospho-alpha-D-ribose 1-diphosphate. It functions in the pathway pyrimidine metabolism; UMP biosynthesis via de novo pathway; UMP from orotate: step 1/2. Catalyzes the transfer of a ribosyl phosphate group from 5-phosphoribose 1-diphosphate to orotate, leading to the formation of orotidine monophosphate (OMP). The polypeptide is Orotate phosphoribosyltransferase (Xanthomonas axonopodis pv. citri (strain 306)).